A 257-amino-acid chain; its full sequence is MSLLSKTRELNTLLQKHKGIAVDFKDVAQTISSVTVTNVFIVSRRGKILGSSLNELLKSQRINEMLESKHIPSEYTELLMDVKQTESNIDIDNELTVFPPEDKEVFSSSRTTVFPILGGGERLGTLVLGRVKDDFNENDLVLGEYAATVIGMEILREKHNEVEKEARDKAAITMAINSLSYSEKEAIEHIFEELGGNEGLLIASKVADRVGITRSVIVNALRKLESAGVIESRSLGMKGTFIKVKKEKFLDELERNK.

The tract at residues 1 to 155 is GAF domain; sequence MSLLSKTREL…AATVIGMEIL (155 aa). The segment at residues 203–222 is a DNA-binding region (H-T-H motif); it reads ASKVADRVGITRSVIVNALR.

This sequence belongs to the CodY family.

The protein resides in the cytoplasm. Its function is as follows. DNA-binding global transcriptional regulator which is involved in the adaptive response to starvation and acts by directly or indirectly controlling the expression of numerous genes in response to nutrient availability. During rapid exponential growth, CodY is highly active and represses genes whose products allow adaptation to nutrient depletion. In Staphylococcus haemolyticus (strain JCSC1435), this protein is Global transcriptional regulator CodY.